The primary structure comprises 247 residues: Protein AC124 (247 aa).

The protein localises to the host cytoplasm. It is found in the host nucleus. Functionally, accelerates mortality in insect larvae. The sequence is that of Protein AC124 from Lepidoptera (butterflies and moths).